The chain runs to 347 residues: GMP reductase (347 aa).

An NADP(+)-binding site is contributed by 108 to 131 (ADFEKTVQILALNPALNFVCIDVA). K(+) is bound by residues G181 and G183. The Thioimidate intermediate role is filled by C186. An NADP(+)-binding site is contributed by 216–239 (IVSDGGCTMPGDVAKAFGGGADFV).

This sequence belongs to the IMPDH/GMPR family. GuaC type 1 subfamily. As to quaternary structure, homotetramer.

It catalyses the reaction IMP + NH4(+) + NADP(+) = GMP + NADPH + 2 H(+). Functionally, catalyzes the irreversible NADPH-dependent deamination of GMP to IMP. It functions in the conversion of nucleobase, nucleoside and nucleotide derivatives of G to A nucleotides, and in maintaining the intracellular balance of A and G nucleotides. The polypeptide is GMP reductase (Salmonella paratyphi A (strain ATCC 9150 / SARB42)).